We begin with the raw amino-acid sequence, 338 residues long: RNA 3'-terminal phosphate cyclase (338 aa).

ATP-binding positions include Gln-103 and 283 to 287 (YLADQ). His-308 acts as the Tele-AMP-histidine intermediate in catalysis.

This sequence belongs to the RNA 3'-terminal cyclase family. Type 1 subfamily.

The protein localises to the cytoplasm. The enzyme catalyses a 3'-end 3'-phospho-ribonucleotide-RNA + ATP = a 3'-end 2',3'-cyclophospho-ribonucleotide-RNA + AMP + diphosphate. Catalyzes the conversion of 3'-phosphate to a 2',3'-cyclic phosphodiester at the end of RNA. The mechanism of action of the enzyme occurs in 3 steps: (A) adenylation of the enzyme by ATP; (B) transfer of adenylate to an RNA-N3'P to produce RNA-N3'PP5'A; (C) and attack of the adjacent 2'-hydroxyl on the 3'-phosphorus in the diester linkage to produce the cyclic end product. The biological role of this enzyme is unknown but it is likely to function in some aspects of cellular RNA processing. This chain is RNA 3'-terminal phosphate cyclase, found in Escherichia coli (strain SMS-3-5 / SECEC).